Here is a 255-residue protein sequence, read N- to C-terminus: Imidazole glycerol phosphate synthase subunit HisF (255 aa).

Active-site residues include Asp-12 and Asp-131.

Belongs to the HisA/HisF family. Heterodimer of HisH and HisF.

It localises to the cytoplasm. It catalyses the reaction 5-[(5-phospho-1-deoxy-D-ribulos-1-ylimino)methylamino]-1-(5-phospho-beta-D-ribosyl)imidazole-4-carboxamide + L-glutamine = D-erythro-1-(imidazol-4-yl)glycerol 3-phosphate + 5-amino-1-(5-phospho-beta-D-ribosyl)imidazole-4-carboxamide + L-glutamate + H(+). It functions in the pathway amino-acid biosynthesis; L-histidine biosynthesis; L-histidine from 5-phospho-alpha-D-ribose 1-diphosphate: step 5/9. Functionally, IGPS catalyzes the conversion of PRFAR and glutamine to IGP, AICAR and glutamate. The HisF subunit catalyzes the cyclization activity that produces IGP and AICAR from PRFAR using the ammonia provided by the HisH subunit. This chain is Imidazole glycerol phosphate synthase subunit HisF, found in Zymomonas mobilis subsp. mobilis (strain ATCC 31821 / ZM4 / CP4).